A 712-amino-acid chain; its full sequence is Ribosomal RNA large subunit methyltransferase K/L (712 aa).

The region spanning 46-157 (GAYQALLHSR…REKLIVSLDL (112 aa)) is the THUMP domain.

This sequence belongs to the methyltransferase superfamily. RlmKL family.

The protein localises to the cytoplasm. It carries out the reaction guanosine(2445) in 23S rRNA + S-adenosyl-L-methionine = N(2)-methylguanosine(2445) in 23S rRNA + S-adenosyl-L-homocysteine + H(+). It catalyses the reaction guanosine(2069) in 23S rRNA + S-adenosyl-L-methionine = N(2)-methylguanosine(2069) in 23S rRNA + S-adenosyl-L-homocysteine + H(+). Its function is as follows. Specifically methylates the guanine in position 2445 (m2G2445) and the guanine in position 2069 (m7G2069) of 23S rRNA. This chain is Ribosomal RNA large subunit methyltransferase K/L, found in Haemophilus ducreyi (strain 35000HP / ATCC 700724).